The following is a 316-amino-acid chain: Transaldolase (316 aa).

Lys-132 functions as the Schiff-base intermediate with substrate in the catalytic mechanism.

Belongs to the transaldolase family. Type 1 subfamily.

Its subcellular location is the cytoplasm. It carries out the reaction D-sedoheptulose 7-phosphate + D-glyceraldehyde 3-phosphate = D-erythrose 4-phosphate + beta-D-fructose 6-phosphate. Its pathway is carbohydrate degradation; pentose phosphate pathway; D-glyceraldehyde 3-phosphate and beta-D-fructose 6-phosphate from D-ribose 5-phosphate and D-xylulose 5-phosphate (non-oxidative stage): step 2/3. Transaldolase is important for the balance of metabolites in the pentose-phosphate pathway. The sequence is that of Transaldolase from Vibrio cholerae serotype O1 (strain ATCC 39315 / El Tor Inaba N16961).